Reading from the N-terminus, the 514-residue chain is Maltose/maltodextrin transport system permease protein MalF (514 aa).

Residues 1-12 (MDAVKKKHWWQS) lie on the Cytoplasmic side of the membrane. A helical membrane pass occupies residues 13–35 (PQLTWSVIGLLCLLVGYLVVLMY). The Periplasmic portion of the chain corresponds to 36–39 (AQGE). Residues 40-57 (YLFAIMTLILSSVGLYIF) form a helical membrane-spanning segment. The Cytoplasmic portion of the chain corresponds to 58-69 (SNRKAYAWRYVY). Residues 70–92 (PGLAGMGLFVLFPLICTIAIAFT) form a helical membrane-spanning segment. Topologically, residues 93–283 (NYSSTNQLTF…QKPFFAIFVW (191 aa)) are periplasmic. Residues 281–505 (FVWTVVFSVL…LLVGALAIVN (225 aa)) form the ABC transmembrane type-1 domain. A helical membrane pass occupies residues 284 to 306 (TVVFSVLTVILTVAVGMVLACLV). The Cytoplasmic segment spans residues 307–318 (QWEALKGKAIYR). A helical membrane pass occupies residues 319 to 341 (VLLILPYAVPSFISILIFKGLFN). Topologically, residues 342-369 (QSFGEINMMLSALFGIKPAWFSDPTTAR) are periplasmic. The helical transmembrane segment at 370 to 392 (TMIIIVNTWLGYPYMMILCMGLL) threads the bilayer. Topologically, residues 393–412 (KAIPDDLYEASAMDGAGPFQ) are cytoplasmic. The chain crosses the membrane as a helical span at residues 413–435 (NFFKITLPLLIKPLTPLMIASFA). At 436–483 (FNFNNFVLIQLLTNGGPDRLGTTTPAGYTDLLVSYTYRIAFEGGGGQD) the chain is on the periplasmic side. The chain crosses the membrane as a helical span at residues 484–506 (FGLAAAIATLIFLLVGALAIVNL). Residues 507–514 (KATRMKFD) are Cytoplasmic-facing.

Belongs to the binding-protein-dependent transport system permease family. MalFG subfamily. As to quaternary structure, the complex is composed of two ATP-binding proteins (MalK), two transmembrane proteins (MalG and MalF) and a solute-binding protein (MalE).

The protein localises to the cell inner membrane. In terms of biological role, part of the ABC transporter complex MalEFGK involved in maltose/maltodextrin import. Probably responsible for the translocation of the substrate across the membrane. This chain is Maltose/maltodextrin transport system permease protein MalF (malF), found in Klebsiella aerogenes (Enterobacter aerogenes).